The chain runs to 210 residues: Pyridoxine/pyridoxamine 5'-phosphate oxidase (210 aa).

Substrate contacts are provided by residues 7 to 10 (REDY) and Lys-65. FMN contacts are provided by residues 60–65 (RVVLLK), 75–76 (FT), Arg-81, Lys-82, and Gln-104. Residues Tyr-122, Arg-126, and Ser-130 each contribute to the substrate site. FMN is bound by residues 139 to 140 (QS) and Trp-183. A substrate-binding site is contributed by 189 to 191 (RLH). Residue Arg-193 participates in FMN binding.

Belongs to the pyridoxamine 5'-phosphate oxidase family. In terms of assembly, homodimer. FMN is required as a cofactor.

The enzyme catalyses pyridoxamine 5'-phosphate + O2 + H2O = pyridoxal 5'-phosphate + H2O2 + NH4(+). The catalysed reaction is pyridoxine 5'-phosphate + O2 = pyridoxal 5'-phosphate + H2O2. It participates in cofactor metabolism; pyridoxal 5'-phosphate salvage; pyridoxal 5'-phosphate from pyridoxamine 5'-phosphate: step 1/1. The protein operates within cofactor metabolism; pyridoxal 5'-phosphate salvage; pyridoxal 5'-phosphate from pyridoxine 5'-phosphate: step 1/1. Catalyzes the oxidation of either pyridoxine 5'-phosphate (PNP) or pyridoxamine 5'-phosphate (PMP) into pyridoxal 5'-phosphate (PLP). The chain is Pyridoxine/pyridoxamine 5'-phosphate oxidase from Actinobacillus succinogenes (strain ATCC 55618 / DSM 22257 / CCUG 43843 / 130Z).